A 188-amino-acid chain; its full sequence is Acireductone dioxygenase 1 (188 aa).

Fe(2+) contacts are provided by His90, His92, Glu96, and His135. The Ni(2+) site is built by His90, His92, Glu96, and His135.

The protein belongs to the acireductone dioxygenase (ARD) family. Requires Fe(2+) as cofactor. It depends on Ni(2+) as a cofactor.

Its subcellular location is the cytoplasm. It localises to the nucleus. The enzyme catalyses 1,2-dihydroxy-5-(methylsulfanyl)pent-1-en-3-one + O2 = 4-methylsulfanyl-2-oxobutanoate + formate + 2 H(+). The catalysed reaction is 1,2-dihydroxy-5-(methylsulfanyl)pent-1-en-3-one + O2 = 3-(methylsulfanyl)propanoate + CO + formate + 2 H(+). It functions in the pathway amino-acid biosynthesis; L-methionine biosynthesis via salvage pathway; L-methionine from S-methyl-5-thio-alpha-D-ribose 1-phosphate: step 5/6. Its function is as follows. Catalyzes 2 different reactions between oxygen and the acireductone 1,2-dihydroxy-3-keto-5-methylthiopentene (DHK-MTPene) depending upon the metal bound in the active site. Fe-containing acireductone dioxygenase (Fe-ARD) produces formate and 2-keto-4-methylthiobutyrate (KMTB), the alpha-ketoacid precursor of methionine in the methionine recycle pathway. Ni-containing acireductone dioxygenase (Ni-ARD) produces methylthiopropionate, carbon monoxide and formate, and does not lie on the methionine recycle pathway. This Vitis vinifera (Grape) protein is Acireductone dioxygenase 1.